The following is a 196-amino-acid chain: Segregation and condensation protein B (196 aa).

It belongs to the ScpB family. In terms of assembly, homodimer. Homodimerization may be required to stabilize the binding of ScpA to the Smc head domains. Component of a cohesin-like complex composed of ScpA, ScpB and the Smc homodimer, in which ScpA and ScpB bind to the head domain of Smc. The presence of the three proteins is required for the association of the complex with DNA.

Its subcellular location is the cytoplasm. Functionally, participates in chromosomal partition during cell division. May act via the formation of a condensin-like complex containing Smc and ScpA that pull DNA away from mid-cell into both cell halves. This Lactobacillus johnsonii (strain CNCM I-12250 / La1 / NCC 533) protein is Segregation and condensation protein B.